A 135-amino-acid polypeptide reads, in one-letter code: Interleukin-4 (135 aa).

Positions 1–24 (MGLTSQLIPVLVCLLVCTSHFVHG) are cleaved as a signal peptide. 3 disulfide bridges follow: Cys27/Cys135, Cys48/Cys85, and Cys70/Cys105. Asn62 is a glycosylation site (N-linked (GlcNAc...) asparagine).

This sequence belongs to the IL-4/IL-13 family.

The protein localises to the secreted. Participates in at least several B-cell activation processes as well as of other cell types. It is a costimulator of DNA-synthesis. It induces the expression of class II MHC molecules on resting B-cells. It enhances both secretion and cell surface expression of IgE and IgG1. It also regulates the expression of the low affinity Fc receptor for IgE (CD23) on both lymphocytes and monocytes. Positively regulates IL31RA expression in macrophages. Stimulates autophagy in dendritic cells by interfering with mTORC1 signaling and through the induction of RUFY4. The polypeptide is Interleukin-4 (IL4) (Bos taurus (Bovine)).